Consider the following 311-residue polypeptide: UDP-N-acetylenolpyruvoylglucosamine reductase (311 aa).

The FAD-binding PCMH-type domain occupies 34–198 (MGGAADLFIT…LEGTFRLQKG (165 aa)). Arginine 177 is an active-site residue. The active-site Proton donor is serine 227. The active site involves glutamate 297.

It belongs to the MurB family. Requires FAD as cofactor.

It localises to the cytoplasm. The catalysed reaction is UDP-N-acetyl-alpha-D-muramate + NADP(+) = UDP-N-acetyl-3-O-(1-carboxyvinyl)-alpha-D-glucosamine + NADPH + H(+). It functions in the pathway cell wall biogenesis; peptidoglycan biosynthesis. In terms of biological role, cell wall formation. The sequence is that of UDP-N-acetylenolpyruvoylglucosamine reductase from Shouchella clausii (strain KSM-K16) (Alkalihalobacillus clausii).